The following is a 507-amino-acid chain: Maturase K (507 aa).

The protein belongs to the intron maturase 2 family. MatK subfamily.

It is found in the plastid. The protein resides in the chloroplast. In terms of biological role, usually encoded in the trnK tRNA gene intron. Probably assists in splicing its own and other chloroplast group II introns. The protein is Maturase K of Magnolia figo (Banana shrub).